A 207-amino-acid polypeptide reads, in one-letter code: uncharacterized protein (207 aa).

Catalysis depends on residues Arg-80, Glu-88, and Arg-148.

Belongs to the thermonuclease family.

This is an uncharacterized protein from Methanocaldococcus jannaschii (strain ATCC 43067 / DSM 2661 / JAL-1 / JCM 10045 / NBRC 100440) (Methanococcus jannaschii).